The primary structure comprises 341 residues: L-threonine 3-dehydrogenase (341 aa).

Cys-38 provides a ligand contact to Zn(2+). Residues Thr-40 and His-43 each act as charge relay system in the active site. Zn(2+) contacts are provided by His-63, Glu-64, Cys-93, Cys-96, Cys-99, and Cys-107. Residues Ile-175, Asp-195, Arg-200, 262–264, and 286–287 contribute to the NAD(+) site; these read LGI and IY.

Belongs to the zinc-containing alcohol dehydrogenase family. In terms of assembly, homotetramer. Requires Zn(2+) as cofactor.

Its subcellular location is the cytoplasm. The enzyme catalyses L-threonine + NAD(+) = (2S)-2-amino-3-oxobutanoate + NADH + H(+). It participates in amino-acid degradation; L-threonine degradation via oxydo-reductase pathway; glycine from L-threonine: step 1/2. Functionally, catalyzes the NAD(+)-dependent oxidation of L-threonine to 2-amino-3-ketobutyrate. The chain is L-threonine 3-dehydrogenase from Colwellia psychrerythraea (strain 34H / ATCC BAA-681) (Vibrio psychroerythus).